The following is a 384-amino-acid chain: 8-amino-7-oxononanoate synthase (384 aa).

R21 lines the substrate pocket. 108–109 provides a ligand contact to pyridoxal 5'-phosphate; that stretch reads GF. H133 provides a ligand contact to substrate. Pyridoxal 5'-phosphate-binding residues include S179, H207, and T233. K236 is subject to N6-(pyridoxal phosphate)lysine. T352 contacts substrate.

The protein belongs to the class-II pyridoxal-phosphate-dependent aminotransferase family. BioF subfamily. In terms of assembly, homodimer. Requires pyridoxal 5'-phosphate as cofactor.

It catalyses the reaction 6-carboxyhexanoyl-[ACP] + L-alanine + H(+) = (8S)-8-amino-7-oxononanoate + holo-[ACP] + CO2. It participates in cofactor biosynthesis; biotin biosynthesis. In terms of biological role, catalyzes the decarboxylative condensation of pimeloyl-[acyl-carrier protein] and L-alanine to produce 8-amino-7-oxononanoate (AON), [acyl-carrier protein], and carbon dioxide. The sequence is that of 8-amino-7-oxononanoate synthase from Escherichia coli O157:H7.